The sequence spans 498 residues: Protein adenylyltransferase Fic (498 aa).

The chain crosses the membrane as a helical span at residues 43–63 (FAFLAFLAGSFLAFSLHALIS). TPR repeat units follow at residues 126-159 (ALSSLRLAQDMYMAGKDDKAARLFEHALALAPRH) and 160-194 (PEVLLRYGEFLEHNQRNIVLADQYYFQALTINPSH). The Inhibitory (S/T)XXXE(G/N) motif motif lies at 251–256 (SVGIEG). Residues Glu255 and 336-339 (VGGH) each bind ATP. Positions 305-440 (ITIKDILELH…IRPFVRFIAD (136 aa)) constitute a Fido domain. Residue His383 is part of the active site. ATP-binding positions include 387–394 (DGNGRTSR), 419–420 (YY), and Asn427.

It belongs to the fic family. As to quaternary structure, homodimer.

It is found in the membrane. The catalysed reaction is L-tyrosyl-[protein] + ATP = O-(5'-adenylyl)-L-tyrosyl-[protein] + diphosphate. It carries out the reaction L-threonyl-[protein] + ATP = 3-O-(5'-adenylyl)-L-threonyl-[protein] + diphosphate. The enzyme catalyses 3-O-(5'-adenylyl)-L-threonyl-[protein] + H2O = L-threonyl-[protein] + AMP + H(+). Its activity is regulated as follows. The side chain of Glu-255 determines which of the two opposing activities (AMPylase or de-AMPylase) will take place. In response to endoplasmic reticulum stress, mediates de-AMPylase activity. Adenylyltransferase activity is inhibited by the inhibitory helix present at the N-terminus: Glu-255 binds ATP and competes with ATP-binding at Arg-394, thereby preventing adenylyltransferase activity. In unstressed cells, disengagement of Glu-255 promotes adenylyltransferase activity. Activation dissociates ATP-binding from Glu-255, allowing ordered binding of the entire ATP moiety with the alpha-phosphate in an orientation that is productive for accepting an incoming target hydroxyl side chain. In terms of biological role, protein that can both mediate the addition of adenosine 5'-monophosphate (AMP) to specific residues of target proteins (AMPylation), and the removal of the same modification from target proteins (de-AMPylation), depending on the context. The side chain of Glu-255 determines which of the two opposing activities (AMPylase or de-AMPylase) will take place. Acts as a key regulator of the unfolded protein response (UPR) by mediating AMPylation or de-AMPylation of Hsc70-3/BiP. In unstressed cells, acts as an adenylyltransferase by mediating AMPylation of Hsc70-3/BiP at 'Thr-518', thereby inactivating it. In response to endoplasmic reticulum stress, acts as a phosphodiesterase by mediating removal of ATP (de-AMPylation) from Hsc70-3/BiP at 'Thr-518', leading to restore HSPA5/BiP activity. This is Protein adenylyltransferase Fic from Drosophila willistoni (Fruit fly).